The chain runs to 228 residues: L-ribulose-5-phosphate 4-epimerase UlaF (228 aa).

Residues 26-27 (GN), 43-44 (SG), and 72-73 (SS) each bind substrate. Zn(2+) contacts are provided by aspartate 74, histidine 93, and histidine 95. Residue aspartate 118 is the Proton donor/acceptor of the active site. Residue histidine 167 coordinates Zn(2+). The Proton donor/acceptor role is filled by tyrosine 225.

The protein belongs to the aldolase class II family. AraD/FucA subfamily. It depends on Zn(2+) as a cofactor.

The enzyme catalyses L-ribulose 5-phosphate = D-xylulose 5-phosphate. The protein operates within cofactor degradation; L-ascorbate degradation; D-xylulose 5-phosphate from L-ascorbate: step 4/4. Its function is as follows. Catalyzes the isomerization of L-ribulose 5-phosphate to D-xylulose 5-phosphate. Is involved in the anaerobic L-ascorbate utilization. This chain is L-ribulose-5-phosphate 4-epimerase UlaF, found in Escherichia coli O81 (strain ED1a).